We begin with the raw amino-acid sequence, 305 residues long: Tyrosine recombinase XerC (305 aa).

The Core-binding (CB) domain occupies 4–95 (TQIQELIIKW…AIKNFYKFLE (92 aa)). The Tyr recombinase domain occupies 116–298 (LLPKALSEEE…SIKHLETAYV (183 aa)). Catalysis depends on residues Arg159, Lys182, His250, Arg253, and His276. Tyr285 functions as the O-(3'-phospho-DNA)-tyrosine intermediate in the catalytic mechanism.

Belongs to the 'phage' integrase family. XerC subfamily. In terms of assembly, forms a cyclic heterotetrameric complex composed of two molecules of XerC and two molecules of XerD.

Its subcellular location is the cytoplasm. Functionally, site-specific tyrosine recombinase, which acts by catalyzing the cutting and rejoining of the recombining DNA molecules. The XerC-XerD complex is essential to convert dimers of the bacterial chromosome into monomers to permit their segregation at cell division. It also contributes to the segregational stability of plasmids. The polypeptide is Tyrosine recombinase XerC (Rickettsia bellii (strain RML369-C)).